Reading from the N-terminus, the 667-residue chain is Probable endo-1,3(4)-beta-glucanase AFLA_105200 (667 aa).

The signal sequence occupies residues 1-24 (MSSSSFVWTVGSIALSSLITPTIA). The region spanning 25–288 (DGSGSRYQLT…WAGGVFGDSG (264 aa)) is the GH16 domain. N-linked (GlcNAc...) asparagine glycosylation occurs at Asn63. Glu144 (nucleophile) is an active-site residue. Glu149 acts as the Proton donor in catalysis. Composition is skewed to polar residues over residues 354-363 (VPSVTSTPIL) and 379-394 (ATSS…QTSV). Disordered stretches follow at residues 354–427 (VPSV…ADAV) and 448–646 (GTIQ…AGAS). Low complexity-rich tracts occupy residues 395–427 (AGAE…ADAV), 448–483 (GTIQ…SQEP), and 574–622 (APTS…EATA). The segment covering 623 to 637 (PTETDSGASTGTNPE) has biased composition (polar residues). Gly644 is lipidated: GPI-anchor amidated glycine. Positions 645–667 (ASKSVGISGLAGIVCGIAMAMLA) are cleaved as a propeptide — removed in mature form.

Belongs to the glycosyl hydrolase 16 family.

The protein localises to the cell membrane. It catalyses the reaction Endohydrolysis of (1-&gt;3)- or (1-&gt;4)-linkages in beta-D-glucans when the glucose residue whose reducing group is involved in the linkage to be hydrolyzed is itself substituted at C-3.. Mixed-linked glucanase involved in the degradation of complex natural cellulosic substrates. The sequence is that of Probable endo-1,3(4)-beta-glucanase AFLA_105200 from Aspergillus flavus (strain ATCC 200026 / FGSC A1120 / IAM 13836 / NRRL 3357 / JCM 12722 / SRRC 167).